Here is a 427-residue protein sequence, read N- to C-terminus: Serine hydroxymethyltransferase (427 aa).

(6S)-5,6,7,8-tetrahydrofolate is bound by residues L124 and 128–130; that span reads GHL. An N6-(pyridoxal phosphate)lysine modification is found at K233.

This sequence belongs to the SHMT family. As to quaternary structure, homodimer. The cofactor is pyridoxal 5'-phosphate.

It is found in the cytoplasm. The enzyme catalyses (6R)-5,10-methylene-5,6,7,8-tetrahydrofolate + glycine + H2O = (6S)-5,6,7,8-tetrahydrofolate + L-serine. It participates in one-carbon metabolism; tetrahydrofolate interconversion. The protein operates within amino-acid biosynthesis; glycine biosynthesis; glycine from L-serine: step 1/1. Its function is as follows. Catalyzes the reversible interconversion of serine and glycine with tetrahydrofolate (THF) serving as the one-carbon carrier. This reaction serves as the major source of one-carbon groups required for the biosynthesis of purines, thymidylate, methionine, and other important biomolecules. Also exhibits THF-independent aldolase activity toward beta-hydroxyamino acids, producing glycine and aldehydes, via a retro-aldol mechanism. This Paracoccus denitrificans (strain Pd 1222) protein is Serine hydroxymethyltransferase.